A 91-amino-acid polypeptide reads, in one-letter code: ATP synthase subunit c (91 aa).

A run of 2 helical transmembrane segments spans residues 4–24 and 53–73; these read LTMC…GTGI and IGLA…LIIL.

It belongs to the ATPase C chain family. As to quaternary structure, F-type ATPases have 2 components, F(1) - the catalytic core - and F(0) - the membrane proton channel. F(1) has five subunits: alpha(3), beta(3), gamma(1), delta(1), epsilon(1). F(0) has three main subunits: a(1), b(2) and c(10-14). The alpha and beta chains form an alternating ring which encloses part of the gamma chain. F(1) is attached to F(0) by a central stalk formed by the gamma and epsilon chains, while a peripheral stalk is formed by the delta and b chains.

The protein resides in the cell inner membrane. F(1)F(0) ATP synthase produces ATP from ADP in the presence of a proton or sodium gradient. F-type ATPases consist of two structural domains, F(1) containing the extramembraneous catalytic core and F(0) containing the membrane proton channel, linked together by a central stalk and a peripheral stalk. During catalysis, ATP synthesis in the catalytic domain of F(1) is coupled via a rotary mechanism of the central stalk subunits to proton translocation. Functionally, key component of the F(0) channel; it plays a direct role in translocation across the membrane. A homomeric c-ring of between 10-14 subunits forms the central stalk rotor element with the F(1) delta and epsilon subunits. The protein is ATP synthase subunit c of Geobacter metallireducens (strain ATCC 53774 / DSM 7210 / GS-15).